Reading from the N-terminus, the 584-residue chain is Tyrosine-protein kinase Dnt (584 aa).

The N-terminal stretch at 1-40 (MESVNKCGKSASTRNCTVKMSRKMWVLSLLALAALQLHSG) is a signal peptide. Residues 41–208 (SEVAAHLNVF…LETVMLPPTG (168 aa)) lie on the Extracellular side of the membrane. The 132-residue stretch at 49-180 (VFLNPVEVMR…HLVFRRKKIC (132 aa)) folds into the WIF domain. Residues asparagine 124, asparagine 163, asparagine 168, and asparagine 183 are each glycosylated (N-linked (GlcNAc...) asparagine). The helical transmembrane segment at 209–229 (LITLVVGVSVAMGSVCLLLMI) threads the bilayer. Over 230-584 (AYCVKGAANK…EFYSQITRYV (355 aa)) the chain is Cytoplasmic. The segment at 241–261 (QHHQHGGQPMRTSSFQRLNTH) is disordered. The segment covering 250–261 (MRTSSFQRLNTH) has biased composition (polar residues). The Protein kinase domain maps to 317–577 (VRLSSLLQEG…QLQSCLSEFY (261 aa)). ATP is bound by residues 323 to 331 (LQEGTFGRV) and lysine 345. The active-site Proton acceptor is the aspartate 442. Phosphotyrosine; by autocatalysis is present on tyrosine 472.

It belongs to the protein kinase superfamily. Tyr protein kinase family. Expressed in dynamic domains in the embryonic epidermis, many of which border on sites of epithelial invagination into the embryo interior, including ventral furrow, cephalic furrow, fore- and hindgut, optic lobe and tracheal pits. Later in embryogenesis, expression is seen in imaginal tissues.

Its subcellular location is the cell membrane. The enzyme catalyses L-tyrosyl-[protein] + ATP = O-phospho-L-tyrosyl-[protein] + ADP + H(+). Functionally, may play an essential role in neuronal pathway recognition and ventral muscle attachment site selection. In Drosophila melanogaster (Fruit fly), this protein is Tyrosine-protein kinase Dnt (dnt).